Here is a 327-residue protein sequence, read N- to C-terminus: Aromatase (327 aa).

Residue C315 participates in heme binding.

It belongs to the cytochrome P450 family. Heme is required as a cofactor.

The protein resides in the membrane. It catalyses the reaction testosterone + 3 reduced [NADPH--hemoprotein reductase] + 3 O2 = 17beta-estradiol + formate + 3 oxidized [NADPH--hemoprotein reductase] + 4 H2O + 4 H(+). It carries out the reaction androst-4-ene-3,17-dione + 3 reduced [NADPH--hemoprotein reductase] + 3 O2 = estrone + formate + 3 oxidized [NADPH--hemoprotein reductase] + 4 H2O + 4 H(+). In terms of biological role, catalyzes the formation of aromatic C18 estrogens from C19 androgens. The chain is Aromatase (CYP19A1) from Coturnix japonica (Japanese quail).